The chain runs to 350 residues: Meiotic driver wtf30 (350 aa).

A disordered region spans residues 1-92 (MKNKYYPLRS…RENHSSGTTD (92 aa)). Residues 11–29 (SIDELSTKNDNEIDLEKGP) show a composition bias toward basic and acidic residues. The span at 57–72 (GANNPNLFNTDESTTP) shows a compositional bias: polar residues. 7 helical membrane-spanning segments follow: residues 97 to 117 (FLIK…PAVC), 134 to 154 (WVYF…LWCF), 165 to 185 (CVKV…IGLF), 190 to 210 (EMMI…FVYI), 226 to 246 (CTIS…FWTF), 253 to 273 (LAKV…TMFL), and 280 to 300 (WTGC…LFLC).

This sequence belongs to the WTF family. As to quaternary structure, homomer. Forms protein aggregates. The two isoforms can interact with each other and with themselves. High sequence similarity is required for their interaction.

It localises to the spore membrane. The protein localises to the vacuole membrane. The protein resides in the ascus epiplasm. Its subcellular location is the cytoplasm. It is found in the endoplasmic reticulum membrane. In terms of biological role, promotes unequal transmission of alleles from the parental zygote to progeny spores by acting as poison/antidote system where the poison and antidote proteins are produced from the same locus; the poison component is trans-acting and targets all spores within an ascus whereas the antidote component is spore-specific, leading to poisoning of all progeny that do not inherit the allele. Functionally, localizes isoform 2 to the vacuole thereby facilitating its degradation. Its function is as follows. Forms toxic aggregates that disrupt spore maturation. This Schizosaccharomyces kambucha (Fission yeast) protein is Meiotic driver wtf30.